The sequence spans 514 residues: HERV-H LTR-associating protein 1 homolog (514 aa).

Positions M1–G29 are cleaved as a signal peptide. 9 N-linked (GlcNAc...) asparagine glycosylation sites follow: N58, N97, N139, N161, N179, N200, N217, N232, and N321. A disordered region spans residues L379 to Q420. Polar residues predominate over residues I384–S398. Low complexity predominate over residues P403–A415.

It is found in the secreted. The protein is HERV-H LTR-associating protein 1 homolog (Hhla1) of Mus musculus (Mouse).